A 470-amino-acid chain; its full sequence is uncharacterized protein (470 aa).

In terms of domain architecture, SPX spans 1–337 (MKFGHDFKRA…SLTAQPLFFQ (337 aa)). The segment at 118 to 145 (ASNVPSTPSDSTQQPPTNTLPSVSASSQ) is disordered. Residues 122–136 (PSTPSDSTQQPPTNT) are compositionally biased toward low complexity. Residues 374-413 (CAICSNVAYKPVRLGCSHVFCLHCLIILQKQKVDFCPLCR) form an RING-type zinc finger.

It localises to the cytoplasm. This is an uncharacterized protein from Schizosaccharomyces pombe (strain 972 / ATCC 24843) (Fission yeast).